A 359-amino-acid polypeptide reads, in one-letter code: tRNA-specific 2-thiouridylase MnmA (359 aa).

ATP-binding positions include 7–14 and L33; that span reads GLSGGVDS. Catalysis depends on C94, which acts as the Nucleophile. A disulfide bridge connects residues C94 and C193. G119 is an ATP binding site. The interval 143 to 145 is interaction with tRNA; that stretch reads KDQ. The active-site Cysteine persulfide intermediate is the C193. The segment at 298–299 is interaction with tRNA; that stretch reads RY.

The protein belongs to the MnmA/TRMU family.

Its subcellular location is the cytoplasm. The catalysed reaction is S-sulfanyl-L-cysteinyl-[protein] + uridine(34) in tRNA + AH2 + ATP = 2-thiouridine(34) in tRNA + L-cysteinyl-[protein] + A + AMP + diphosphate + H(+). Functionally, catalyzes the 2-thiolation of uridine at the wobble position (U34) of tRNA, leading to the formation of s(2)U34. The chain is tRNA-specific 2-thiouridylase MnmA from Trichodesmium erythraeum (strain IMS101).